The chain runs to 213 residues: Peroxynitrite isomerase (213 aa).

Residues 1 to 10 are compositionally biased toward low complexity; that stretch reads MGADATGDTA. The disordered stretch occupies residues 1–26; it reads MGADATGDTAARGDRAAHGDTASGGA. Residues 51–57 carry the GXWXGXG motif; that stretch reads GTWRGEG. H203 is a heme b binding site.

The protein belongs to the nitrobindin family. Homodimer. Requires heme b as cofactor.

The catalysed reaction is peroxynitrite = nitrate. The protein operates within nitrogen metabolism. Functionally, heme-binding protein able to scavenge peroxynitrite and to protect free L-tyrosine against peroxynitrite-mediated nitration, by acting as a peroxynitrite isomerase that converts peroxynitrite to nitrate. Therefore, this protein likely plays a role in peroxynitrite sensing and in the detoxification of reactive nitrogen and oxygen species (RNS and ROS, respectively). Is able to bind nitric oxide (NO) in vitro, but may act as a sensor of peroxynitrite levels in vivo. The chain is Peroxynitrite isomerase from Parafrankia sp. (strain EAN1pec).